We begin with the raw amino-acid sequence, 295 residues long: Ribosomal protein L11 methyltransferase (295 aa).

S-adenosyl-L-methionine-binding residues include threonine 146, glycine 167, aspartate 189, and asparagine 231.

Belongs to the methyltransferase superfamily. PrmA family.

The protein localises to the cytoplasm. It carries out the reaction L-lysyl-[protein] + 3 S-adenosyl-L-methionine = N(6),N(6),N(6)-trimethyl-L-lysyl-[protein] + 3 S-adenosyl-L-homocysteine + 3 H(+). Methylates ribosomal protein L11. This chain is Ribosomal protein L11 methyltransferase, found in Vibrio parahaemolyticus serotype O3:K6 (strain RIMD 2210633).